A 58-amino-acid chain; its full sequence is Leucine zipper protein 6 (58 aa).

In terms of tissue distribution, widely expressed, highest levels found in brain, placenta, spleen, testis, and ovary. Up-regulated in some tumor cells.

The sequence is that of Leucine zipper protein 6 (LUZP6) from Homo sapiens (Human).